Reading from the N-terminus, the 313-residue chain is DNA-directed RNA polymerase subunit alpha (313 aa).

Residues 1–226 form an alpha N-terminal domain (alpha-NTD) region; that stretch reads MLEIEKPKIE…EHLQLFVNLN (226 aa). The segment at 243 to 313 is alpha C-terminal domain (alpha-CTD); sequence KEKLAEMPIE…MGLSLRKEEE (71 aa).

The protein belongs to the RNA polymerase alpha chain family. Homodimer. The RNAP catalytic core consists of 2 alpha, 1 beta, 1 beta' and 1 omega subunit. When a sigma factor is associated with the core the holoenzyme is formed, which can initiate transcription.

The catalysed reaction is RNA(n) + a ribonucleoside 5'-triphosphate = RNA(n+1) + diphosphate. Its function is as follows. DNA-dependent RNA polymerase catalyzes the transcription of DNA into RNA using the four ribonucleoside triphosphates as substrates. The sequence is that of DNA-directed RNA polymerase subunit alpha from Carboxydothermus hydrogenoformans (strain ATCC BAA-161 / DSM 6008 / Z-2901).